Reading from the N-terminus, the 254-residue chain is DNA repair protein RecO (254 aa).

The protein belongs to the RecO family.

Functionally, involved in DNA repair and RecF pathway recombination. This chain is DNA repair protein RecO, found in Anaeromyxobacter dehalogenans (strain 2CP-C).